The chain runs to 156 residues: ATP synthase subunit b (156 aa).

Residues 7–27 traverse the membrane as a helical segment; that stretch reads LIGQLIAFALFVAFCMKFVWP.

It belongs to the ATPase B chain family. In terms of assembly, F-type ATPases have 2 components, F(1) - the catalytic core - and F(0) - the membrane proton channel. F(1) has five subunits: alpha(3), beta(3), gamma(1), delta(1), epsilon(1). F(0) has three main subunits: a(1), b(2) and c(10-14). The alpha and beta chains form an alternating ring which encloses part of the gamma chain. F(1) is attached to F(0) by a central stalk formed by the gamma and epsilon chains, while a peripheral stalk is formed by the delta and b chains.

It localises to the cell inner membrane. F(1)F(0) ATP synthase produces ATP from ADP in the presence of a proton or sodium gradient. F-type ATPases consist of two structural domains, F(1) containing the extramembraneous catalytic core and F(0) containing the membrane proton channel, linked together by a central stalk and a peripheral stalk. During catalysis, ATP synthesis in the catalytic domain of F(1) is coupled via a rotary mechanism of the central stalk subunits to proton translocation. Functionally, component of the F(0) channel, it forms part of the peripheral stalk, linking F(1) to F(0). In Actinobacillus pleuropneumoniae serotype 7 (strain AP76), this protein is ATP synthase subunit b.